The following is a 119-amino-acid chain: Large ribosomal subunit protein bL19 (119 aa).

The protein belongs to the bacterial ribosomal protein bL19 family.

Functionally, this protein is located at the 30S-50S ribosomal subunit interface and may play a role in the structure and function of the aminoacyl-tRNA binding site. The protein is Large ribosomal subunit protein bL19 of Photobacterium profundum (strain SS9).